A 425-amino-acid chain; its full sequence is tRNA(Ile)-lysidine synthase (425 aa).

Residue 27–32 participates in ATP binding; the sequence is SGGLDS.

Belongs to the tRNA(Ile)-lysidine synthase family.

It is found in the cytoplasm. It catalyses the reaction cytidine(34) in tRNA(Ile2) + L-lysine + ATP = lysidine(34) in tRNA(Ile2) + AMP + diphosphate + H(+). Its function is as follows. Ligates lysine onto the cytidine present at position 34 of the AUA codon-specific tRNA(Ile) that contains the anticodon CAU, in an ATP-dependent manner. Cytidine is converted to lysidine, thus changing the amino acid specificity of the tRNA from methionine to isoleucine. The polypeptide is tRNA(Ile)-lysidine synthase (Streptococcus sanguinis (strain SK36)).